The chain runs to 251 residues: Hydroxyacylglutathione hydrolase (251 aa).

7 residues coordinate Zn(2+): histidine 58, histidine 60, aspartate 62, histidine 63, histidine 116, aspartate 135, and histidine 173.

It belongs to the metallo-beta-lactamase superfamily. Glyoxalase II family. As to quaternary structure, monomer. The cofactor is Zn(2+).

It carries out the reaction an S-(2-hydroxyacyl)glutathione + H2O = a 2-hydroxy carboxylate + glutathione + H(+). It participates in secondary metabolite metabolism; methylglyoxal degradation; (R)-lactate from methylglyoxal: step 2/2. Thiolesterase that catalyzes the hydrolysis of S-D-lactoyl-glutathione to form glutathione and D-lactic acid. The polypeptide is Hydroxyacylglutathione hydrolase (Bdellovibrio bacteriovorus (strain ATCC 15356 / DSM 50701 / NCIMB 9529 / HD100)).